The sequence spans 158 residues: Large ribosomal subunit protein bL19 (158 aa).

The segment at 1–35 (MTADSKDTSMSEDNTETATAIENSSAMVTDVTSKS) is disordered. Over residues 16–35 (ETATAIENSSAMVTDVTSKS) the composition is skewed to polar residues.

The protein belongs to the bacterial ribosomal protein bL19 family.

Functionally, this protein is located at the 30S-50S ribosomal subunit interface and may play a role in the structure and function of the aminoacyl-tRNA binding site. This Prochlorococcus marinus (strain MIT 9313) protein is Large ribosomal subunit protein bL19.